The primary structure comprises 122 residues: Anti-sigma-F factor antagonist RsfB (122 aa).

Positions 7–115 constitute an STAS domain; that stretch reads ITVTVADHNG…STLHDALTGV (109 aa). At serine 61 the chain carries Phosphoserine.

Belongs to the anti-sigma-factor antagonist family. In terms of assembly, interacts with anti-sigma-F factor RsbW (UsfX). Its phosphorylation may prevent this interaction. Putative phosphorylation on Ser-61 may prevent interaction with RsbW.

In terms of biological role, positive regulator of sigma-F (SigF) activity. Binds to anti-sigma-F factor RsbW (UsfX) preventing its binding to SigF, thus activating transcription. The polypeptide is Anti-sigma-F factor antagonist RsfB (rsfB) (Mycobacterium tuberculosis (strain CDC 1551 / Oshkosh)).